We begin with the raw amino-acid sequence, 441 residues long: Zinc finger protein ZIC 3 (441 aa).

The C2H2-type 1; atypical zinc-finger motif lies at 222-257 (LSCKWLEESTMNHPQKTCDRTFSSMHELVTHMTMEH). Residues 266–293 (HICYWEECPRGGKSFKAKYKLVNHIRVH) form a C2H2-type 2; atypical zinc finger. 3 consecutive C2H2-type zinc fingers follow at residues 299 to 323 (FPCPFPGCGKIFARSENLKIHKRTH), 329 to 353 (FKCEFEGCDRRFANSSDRKKHMHVH), and 359 to 381 (YICKVCDKSYTHPSSLRKHMKVH). The segment at 375–441 (RKHMKVHESQ…LPPNFNEWYV (67 aa)) is disordered. Low complexity predominate over residues 383–399 (SQGSDSSPAASSGYESA). Residues 406 to 429 (SANSEEPSKNSSATHQTNNNSHNT) are compositionally biased toward polar residues.

It belongs to the GLI C2H2-type zinc-finger protein family. First detected at early gastrula (stage 10.25) in the dorsal lip and prospective neural plate. Also expressed in the mesoderm at early gastrulation, with expression strongest on the dorsal side. Mesodermal expression continues at stage 12 but is hardly detectable after stage 14. As gastrulation proceeds, expression decreases in the dorsal lip and increases in the prospective neural plate. At the neural plate stage (stage 14), expressed strongly in the prospective mesencephalon and anterior rhombencephalon, after which expression becomes stronger in the anterior neural folds. At early tailbud stage (stage 20), expression becomes restricted to the dorsal region of forebrain, midbrain and hindbrain, and weakly to the dorsal trunk. After mid-tailbud stage, expression decreases in the diencephalon, appears in the lateral mesoderm of the tailbud region and becomes restricted in the dorsal part of the neural tube.

Its subcellular location is the nucleus. The protein resides in the cytoplasm. Probably acts as a transcriptional activator. May bind to the minimal GLI-consensus sequence 5'-GGGTGGTC-3'. Can determine the ectodermal cell fate and promote the earliest step of neural and neural crest development. Involved in establishing left-right asymmetry in the embryo. The polypeptide is Zinc finger protein ZIC 3 (zic3) (Xenopus laevis (African clawed frog)).